The following is an 870-amino-acid chain: Rho GTPase-activating protein 7 (870 aa).

In terms of domain architecture, PH spans 18–125; it reads TVFKSGPLFI…WKTALEQALA (108 aa). The Rho-GAP domain maps to 167 to 367; sequence LALEDIDGSP…VLLEDYGSIF (201 aa). Disordered regions lie at residues 378-432 and 446-465; these read STES…SGCT and DSDIESPRDTNGPRCNSNIR. Positions 407–417 are enriched in acidic residues; sequence NEVEPVTDDDN. Positions 569–693 form a coiled coil; the sequence is GEDELAIQRL…HQLNQQRQTH (125 aa). The segment at 736 to 793 is disordered; the sequence is HEENVLGAEWRNSKGAGSFGVGNSRQPSRKQIPESTNTTDSKISEESGKISVDKLSSI. Over residues 777–787 the composition is skewed to basic and acidic residues; the sequence is KISEESGKISV.

Its function is as follows. Acts as a GTPase activator for the Rac-type GTPase by converting it to an inactive GDP-bound state. This chain is Rho GTPase-activating protein 7 (ROPGAP7), found in Arabidopsis thaliana (Mouse-ear cress).